We begin with the raw amino-acid sequence, 177 residues long: MTVATNVNAAGVDREVATQELNRELQDKGFLLTSTEDIINWARTGSLHWMTFGLACCAVEMMHTAMPRYDMERFGTAPRASPRQSDLMIVAGTLTNKMAPALRKVYDQMPEPRYVISMGSCANGGGYYHYSYSVVRGCDRIVPVDVYVPGCPPTAEALLYGIMQLQRKIRRTGTIVR.

The [4Fe-4S] cluster site is built by Cys56, Cys57, Cys121, and Cys151.

This sequence belongs to the complex I 20 kDa subunit family. As to quaternary structure, NDH-1 is composed of 14 different subunits. Subunits NuoB, C, D, E, F, and G constitute the peripheral sector of the complex. Requires [4Fe-4S] cluster as cofactor.

The protein localises to the cell inner membrane. The enzyme catalyses a quinone + NADH + 5 H(+)(in) = a quinol + NAD(+) + 4 H(+)(out). Its function is as follows. NDH-1 shuttles electrons from NADH, via FMN and iron-sulfur (Fe-S) centers, to quinones in the respiratory chain. Couples the redox reaction to proton translocation (for every two electrons transferred, four hydrogen ions are translocated across the cytoplasmic membrane), and thus conserves the redox energy in a proton gradient. This is NADH-quinone oxidoreductase subunit B from Roseobacter denitrificans (strain ATCC 33942 / OCh 114) (Erythrobacter sp. (strain OCh 114)).